The sequence spans 339 residues: ATPase GET3 (339 aa).

37–44 is an ATP binding site; the sequence is KGGVGKTT. Asp66 is a catalytic residue. ATP is bound by residues Glu237 and Asn264. 2 residues coordinate Zn(2+): Cys275 and Cys278.

Belongs to the arsA ATPase family. In terms of assembly, homodimer.

The protein localises to the cytoplasm. It is found in the endoplasmic reticulum. ATPase required for the post-translational delivery of tail-anchored (TA) proteins to the endoplasmic reticulum. Recognizes and selectively binds the transmembrane domain of TA proteins in the cytosol. This complex then targets to the endoplasmic reticulum by membrane-bound receptors, where the tail-anchored protein is released for insertion. This process is regulated by ATP binding and hydrolysis. ATP binding drives the homodimer towards the closed dimer state, facilitating recognition of newly synthesized TA membrane proteins. ATP hydrolysis is required for insertion. Subsequently, the homodimer reverts towards the open dimer state, lowering its affinity for the membrane-bound receptor, and returning it to the cytosol to initiate a new round of targeting. This chain is ATPase GET3, found in Rhodotorula glutinis (Yeast).